The primary structure comprises 383 residues: Probable tRNA sulfurtransferase (383 aa).

One can recognise a THUMP domain in the interval 58–158 (NEIIHILKMI…ENKSYVWFDK (101 aa)). Residues 176–177 (LL), 201–202 (TF), arginine 259, glycine 281, and glutamine 290 each bind ATP.

It belongs to the ThiI family.

It is found in the cytoplasm. It catalyses the reaction [ThiI sulfur-carrier protein]-S-sulfanyl-L-cysteine + a uridine in tRNA + 2 reduced [2Fe-2S]-[ferredoxin] + ATP + H(+) = [ThiI sulfur-carrier protein]-L-cysteine + a 4-thiouridine in tRNA + 2 oxidized [2Fe-2S]-[ferredoxin] + AMP + diphosphate. The enzyme catalyses [ThiS sulfur-carrier protein]-C-terminal Gly-Gly-AMP + S-sulfanyl-L-cysteinyl-[cysteine desulfurase] + AH2 = [ThiS sulfur-carrier protein]-C-terminal-Gly-aminoethanethioate + L-cysteinyl-[cysteine desulfurase] + A + AMP + 2 H(+). Its pathway is cofactor biosynthesis; thiamine diphosphate biosynthesis. In terms of biological role, catalyzes the ATP-dependent transfer of a sulfur to tRNA to produce 4-thiouridine in position 8 of tRNAs, which functions as a near-UV photosensor. Also catalyzes the transfer of sulfur to the sulfur carrier protein ThiS, forming ThiS-thiocarboxylate. This is a step in the synthesis of thiazole, in the thiamine biosynthesis pathway. The sulfur is donated as persulfide by IscS. The sequence is that of Probable tRNA sulfurtransferase from Malacoplasma penetrans (strain HF-2) (Mycoplasma penetrans).